Reading from the N-terminus, the 361-residue chain is Phosphoserine aminotransferase (361 aa).

Arg-43 contributes to the L-glutamate binding site. Pyridoxal 5'-phosphate contacts are provided by residues 77 to 78, Trp-103, Thr-153, Asp-173, and Gln-196; that span reads AS. At Lys-197 the chain carries N6-(pyridoxal phosphate)lysine. 238–239 is a binding site for pyridoxal 5'-phosphate; the sequence is NT.

The protein belongs to the class-V pyridoxal-phosphate-dependent aminotransferase family. SerC subfamily. In terms of assembly, homodimer. Requires pyridoxal 5'-phosphate as cofactor.

It localises to the cytoplasm. The enzyme catalyses O-phospho-L-serine + 2-oxoglutarate = 3-phosphooxypyruvate + L-glutamate. It catalyses the reaction 4-(phosphooxy)-L-threonine + 2-oxoglutarate = (R)-3-hydroxy-2-oxo-4-phosphooxybutanoate + L-glutamate. The protein operates within amino-acid biosynthesis; L-serine biosynthesis; L-serine from 3-phospho-D-glycerate: step 2/3. Its pathway is cofactor biosynthesis; pyridoxine 5'-phosphate biosynthesis; pyridoxine 5'-phosphate from D-erythrose 4-phosphate: step 3/5. Its function is as follows. Catalyzes the reversible conversion of 3-phosphohydroxypyruvate to phosphoserine and of 3-hydroxy-2-oxo-4-phosphonooxybutanoate to phosphohydroxythreonine. The chain is Phosphoserine aminotransferase from Pseudomonas paraeruginosa (strain DSM 24068 / PA7) (Pseudomonas aeruginosa (strain PA7)).